The following is a 251-amino-acid chain: Transmembrane ascorbate-dependent reductase CYB561 (251 aa).

An N-acetylmethionine modification is found at M1. Residues 1–16 (MEGGAAASTPAALPYY) are Cytoplasmic-facing. Residues 17–37 (VAFSQLLGLTLVAMTGAWLGL) traverse the membrane as a helical segment. Residues 19-220 (FSQLLGLTLV…FGGAVLYILT (202 aa)) form the Cytochrome b561 domain. Topologically, residues 38-51 (YRGGIAWESDLQFN) are vesicular. Residues 52 to 72 (AHPLCMVIGLIFLQGDALLVY) form a helical membrane-spanning segment. Heme b-binding residues include H53, R73, and K80. The Cytoplasmic portion of the chain corresponds to 73–85 (RVFRNEAKRTTKV). Residues K80 and K84 each contribute to the L-ascorbate site. Residues 86 to 106 (LHGLLHIFALVIALVGLVAVF) traverse the membrane as a helical segment. Heme b-binding positions include H87, 116 to 119 (DLYS), and H121. The Vesicular portion of the chain corresponds to 107 to 124 (DYHRKEGYADLYSLHSWC). Residues 125-145 (GILVFVLYFVQWLVGFSFFLF) form a helical membrane-spanning segment. Over 146–158 (PGASFSLRSRYRP) the chain is Cytoplasmic. An L-ascorbate-binding site is contributed by R153. The chain crosses the membrane as a helical span at residues 159-179 (QHIFFGATIFLLSVGTALLGL). The heme b site is built by H160 and E181. Residues 180-198 (KEALLFKLRDKYSAFEPEG) lie on the Vesicular side of the membrane. Residues 199–219 (VLANVLGLLLACFGGAVLYIL) traverse the membrane as a helical segment. Residues 220-251 (TRADWKRPSQAEEQALSMDFKTLTEGDSPGSQ) are Cytoplasmic-facing. K225 contributes to the heme b binding site. Phosphoserine is present on S247.

The cofactor is heme b.

It localises to the cytoplasmic vesicle. The protein localises to the secretory vesicle. The protein resides in the chromaffin granule membrane. The catalysed reaction is monodehydro-L-ascorbate radical(out) + L-ascorbate(in) = monodehydro-L-ascorbate radical(in) + L-ascorbate(out). Its function is as follows. Transmembrane reductase that uses ascorbate as an electron donor in the cytoplasm and transfers electrons across membranes to reduce monodehydro-L-ascorbate radical in the lumen of secretory vesicles. It is therefore involved the regeneration and homeostasis within secretory vesicles of ascorbate which in turn provides reducing equivalents needed to support the activity of intravesicular enzymes. The polypeptide is Transmembrane ascorbate-dependent reductase CYB561 (CYB561) (Pongo abelii (Sumatran orangutan)).